A 66-amino-acid chain; its full sequence is uncharacterized protein (66 aa).

This is an uncharacterized protein from Schizosaccharomyces pombe (strain 972 / ATCC 24843) (Fission yeast).